A 318-amino-acid chain; its full sequence is Retinol dehydrogenase 5 (318 aa).

A helical transmembrane segment spans residues 1 to 21 (MWLPLLLGALLWAVLWLLRDR). The Lumenal portion of the chain corresponds to 22–288 (QSLPASNAFV…TRYSPGWDAK (267 aa)). 32–56 (FITGCDSGFGRLLALQLDQRGFRVL) provides a ligand contact to NADP(+). An N-linked (GlcNAc...) asparagine glycan is attached at N160. S163 is a binding site for substrate. Y175 functions as the Proton acceptor in the catalytic mechanism. A helical transmembrane segment spans residues 289 to 309 (LLWLPASYLPASLVDAVLTWV). Over 310–318 (LPKPAQAVY) the chain is Cytoplasmic.

This sequence belongs to the short-chain dehydrogenases/reductases (SDR) family. Homodimer. As to expression, widely expressed. In the eye, abundant in the retinal pigment epithelium.

It localises to the endoplasmic reticulum membrane. It carries out the reaction 11-cis-retinol + NAD(+) = 11-cis-retinal + NADH + H(+). The catalysed reaction is 9-cis-retinol + NAD(+) = 9-cis-retinal + NADH + H(+). It catalyses the reaction 13-cis-retinol + NAD(+) = 13-cis-retinal + NADH + H(+). The enzyme catalyses androsterone + NAD(+) = 5alpha-androstan-3,17-dione + NADH + H(+). It carries out the reaction 5alpha-androstane-3alpha,17beta-diol + NAD(+) = 17beta-hydroxy-5alpha-androstan-3-one + NADH + H(+). It functions in the pathway cofactor metabolism; retinol metabolism. With respect to regulation, inhibited by 9-cis-, 13-cis- and all-trans-retinoic acids, with the most potent inhibitor being 13-cis-retinoic acid. Weakly inhibited by oleic acid. Catalyzes the oxidation of cis-isomers of retinol, including 11-cis-, 9-cis-, and 13-cis-retinol in an NAD-dependent manner. Has no activity towards all-trans retinal. Plays a significant role in 11-cis retinol oxidation in the retinal pigment epithelium cells (RPE). Also recognizes steroids (androsterone, androstanediol) as its substrates. The protein is Retinol dehydrogenase 5 of Homo sapiens (Human).